The following is a 46-amino-acid chain: U1-plectoxin-Pt1f (46 aa).

Intrachain disulfides connect Cys-4-Cys-18, Cys-11-Cys-24, Cys-17-Cys-35, Cys-21-Cys-44, and Cys-26-Cys-33.

Belongs to the neurotoxin 02 (plectoxin) family. 02 (plectoxin) subfamily. As to expression, expressed by the venom gland.

It localises to the secreted. Its function is as follows. Potent toxin that may paralyze and/or kill insect pests such as H.virescens (lepidoptera), S.exigua (beet armyworm) and M.sexta (tobacco hornworm). This chain is U1-plectoxin-Pt1f, found in Plectreurys tristis (Spider).